The following is a 381-amino-acid chain: Homoserine O-acetyltransferase (381 aa).

The region spanning 47 to 359 (NAILICHALT…DKGHDAFLLD (313 aa)) is the AB hydrolase-1 domain. Ser-153 serves as the catalytic Nucleophile. Arg-223 contacts substrate. Catalysis depends on residues Asp-320 and His-353. Position 354 (Asp-354) interacts with substrate.

This sequence belongs to the AB hydrolase superfamily. MetX family. As to quaternary structure, homodimer.

Its subcellular location is the cytoplasm. It carries out the reaction L-homoserine + acetyl-CoA = O-acetyl-L-homoserine + CoA. It functions in the pathway amino-acid biosynthesis; L-methionine biosynthesis via de novo pathway; O-acetyl-L-homoserine from L-homoserine: step 1/1. In terms of biological role, transfers an acetyl group from acetyl-CoA to L-homoserine, forming acetyl-L-homoserine. The sequence is that of Homoserine O-acetyltransferase from Acidiphilium cryptum (strain JF-5).